The sequence spans 443 residues: Phosphoglucosamine mutase (443 aa).

Residue S100 is the Phosphoserine intermediate of the active site. Mg(2+)-binding residues include S100, D239, D241, and D243. S100 is modified (phosphoserine).

It belongs to the phosphohexose mutase family. The cofactor is Mg(2+). In terms of processing, activated by phosphorylation.

It catalyses the reaction alpha-D-glucosamine 1-phosphate = D-glucosamine 6-phosphate. Its function is as follows. Catalyzes the conversion of glucosamine-6-phosphate to glucosamine-1-phosphate. This chain is Phosphoglucosamine mutase, found in Shewanella sediminis (strain HAW-EB3).